Reading from the N-terminus, the 305-residue chain is MTNKQRLVHLFIEYLQIEKNYSALTISGYTEAIEEFVRFMNVQGIDGFEEVSYQDTRIYLTEAYEKGLTRRTISKKVSALRSFYKFLLREQLVKENPFLLVSLPKQDKRIPSFLYEEELKELFTVSDVSTPLGQRNQAILELLYATGMRVSELCSLKESDLDLSMDTVLVHGKGSKQRYVPFGSYAHEALITYLEDGRLKLKAKGKDRADAYVFLNQRGAPLTDRGVRFILTELMKKASGTLHIHPHMLRHTFATHLLNEGADLRSVQELLGHSNLSSTQVYTHVSKDSLRKTYMSHHPRAFKRS.

A Core-binding (CB) domain is found at 2–88 (TNKQRLVHLF…ALRSFYKFLL (87 aa)). A Tyr recombinase domain is found at 109 to 295 (RIPSFLYEEE…SKDSLRKTYM (187 aa)). Residues Arg-149, Lys-173, His-247, Arg-250, and His-273 contribute to the active site. Residue Tyr-282 is the O-(3'-phospho-DNA)-tyrosine intermediate of the active site.

The protein belongs to the 'phage' integrase family. XerC subfamily. As to quaternary structure, forms a cyclic heterotetrameric complex composed of two molecules of XerC and two molecules of XerD.

The protein localises to the cytoplasm. Its function is as follows. Site-specific tyrosine recombinase, which acts by catalyzing the cutting and rejoining of the recombining DNA molecules. The XerC-XerD complex is essential to convert dimers of the bacterial chromosome into monomers to permit their segregation at cell division. It also contributes to the segregational stability of plasmids. The protein is Tyrosine recombinase XerC of Bacillus pumilus (strain SAFR-032).